Consider the following 586-residue polypeptide: Protein BONZAI 2 (586 aa).

Residue G2 is the site of N-myristoyl glycine attachment. 2 consecutive C2 domains span residues 25–164 (SAAT…ALEL) and 176–303 (PQHN…NLAL). D62, D68, D121, and D123 together coordinate Ca(2+). In terms of domain architecture, VWFA spans 344–563 (NFMVAIDFTA…SVVEALLAEL (220 aa)).

The protein belongs to the copine family. Interacts with BAP1 and BAP2. It depends on Ca(2+) as a cofactor. In terms of tissue distribution, expressed in roots, leaves and stems. Expressed in young growing tissues.

It localises to the cell membrane. Its function is as follows. Negative regulator of cell death and defense responses. May repress a number of R genes and may have effects in promoting growth and development. May function in membrane trafficking and in fusion of vesicles with plasma membrane. The sequence is that of Protein BONZAI 2 (BON2) from Arabidopsis thaliana (Mouse-ear cress).